The primary structure comprises 966 residues: C4 phosphoenolpyruvate carboxylase (966 aa).

Phosphoserine is present on serine 11. Histidine 172 is a catalytic residue. Positions 283, 450, and 597 each coordinate D-glucose 6-phosphate. Residue lysine 600 is part of the active site. Arginine 635 lines the D-glucose 6-phosphate pocket. Arginine 641 is a catalytic residue. Position 641 (arginine 641) interacts with L-aspartate. Threonine 665 serves as a coordination point for D-glucose 6-phosphate. An L-aspartate-binding site is contributed by glutamine 673. D-glucose 6-phosphate-binding positions include arginine 753 and 767–769 (RAI). Residues lysine 829, arginine 888, and asparagine 964 each coordinate L-aspartate.

This sequence belongs to the PEPCase type 1 family. As to quaternary structure, homotetramer. The cofactor is Mg(2+). In terms of tissue distribution, expressed in mesophyll cells, but not in bundle-sheath, roots, stems and flowers.

It localises to the cytoplasm. It carries out the reaction oxaloacetate + phosphate = phosphoenolpyruvate + hydrogencarbonate. Its pathway is photosynthesis; C4 acid pathway. 5 fold activation by the allosteric regulator glucose-6-phosphate. Low sensitivity to inhibition by L-malate and L-aspartate. Up-regulated by light-reversible phosphorylation. In terms of biological role, forms oxaloacetate through the carboxylation of phosphoenolpyruvate (PEP). Catalyzes the first step of C4 photosynthesis. The sequence is that of C4 phosphoenolpyruvate carboxylase from Flaveria trinervia (Clustered yellowtops).